The sequence spans 254 residues: Leucyl/phenylalanyl-tRNA--protein transferase (254 aa).

This sequence belongs to the L/F-transferase family.

Its subcellular location is the cytoplasm. It carries out the reaction N-terminal L-lysyl-[protein] + L-leucyl-tRNA(Leu) = N-terminal L-leucyl-L-lysyl-[protein] + tRNA(Leu) + H(+). The enzyme catalyses N-terminal L-arginyl-[protein] + L-leucyl-tRNA(Leu) = N-terminal L-leucyl-L-arginyl-[protein] + tRNA(Leu) + H(+). The catalysed reaction is L-phenylalanyl-tRNA(Phe) + an N-terminal L-alpha-aminoacyl-[protein] = an N-terminal L-phenylalanyl-L-alpha-aminoacyl-[protein] + tRNA(Phe). Functions in the N-end rule pathway of protein degradation where it conjugates Leu, Phe and, less efficiently, Met from aminoacyl-tRNAs to the N-termini of proteins containing an N-terminal arginine or lysine. In Burkholderia multivorans (strain ATCC 17616 / 249), this protein is Leucyl/phenylalanyl-tRNA--protein transferase.